A 533-amino-acid chain; its full sequence is Large neutral amino acids transporter small subunit 2 (533 aa).

The segment at 1–33 is disordered; it reads MEKGTRQRNNTAKNHPDRGSDTSPEAEASSGGG. Residues 1-45 are Cytoplasmic-facing; it reads MEKGTRQRNNTAKNHPDRGSDTSPEAEASSGGGGVALKKEIGLVS. A phosphoserine mark is found at serine 20, serine 23, serine 29, and serine 30. Residues 46 to 66 traverse the membrane as a helical segment; it reads ACGIIVGNIIGSGIFVSPKGV. Isoleucine 54 is a binding site for L-leucine. At 67–74 the chain is on the extracellular side; that stretch reads LENAGSVG. A helical membrane pass occupies residues 75-96; sequence LALIVWIVTGVITAVGALCYAE. Topologically, residues 97–117 are cytoplasmic; it reads LGVTIPKSGGDYSYVKDIFGG. The helical transmembrane segment at 118–150 threads the bilayer; that stretch reads LAGFLRLWIAVLVIYPTNQAVIALTFSNYVLQP. Asparagine 135 is an L-tryptophan binding site. At 151–158 the chain is on the extracellular side; sequence LFPTCFPP. Residues 159–179 traverse the membrane as a helical segment; sequence ESGLRLLAAICLLLLTWVNCS. At 180-182 the chain is on the cytoplasmic side; sequence SVR. A helical transmembrane segment spans residues 183–211; it reads WATRVQDIFTAGKLLALALIIIMGVVQIC. Residues 212–231 lie on the Extracellular side of the membrane; that stretch reads KGEFFWLEPKNAFENFQEPD. Residues 232–253 traverse the membrane as a helical segment; that stretch reads IGLVALAFLQGSFAYGGWNFLN. An L-leucine-binding site is contributed by glycine 247. The Cytoplasmic segment spans residues 254–266; the sequence is YVTEELVDPYKNL. A helical transmembrane segment spans residues 267–288; sequence PRAIFISIPLVTFVYVFANIAY. The Extracellular segment spans residues 289-313; it reads VTAMSPQELLASNAVAVTFGEKLLG. A helical transmembrane segment spans residues 314–339; sequence VMAWIMPISVALSTFGGVNGSLFTSS. The Cytoplasmic segment spans residues 340-365; the sequence is RLFFAGAREGHLPSVLAMIHVKRCTP. The chain crosses the membrane as a helical span at residues 366 to 383; it reads IPALLFTCLSTLLMLVTS. Residues 384–387 are Extracellular-facing; that stretch reads DMYT. The helical transmembrane segment at 388–409 threads the bilayer; sequence LINYVGFINYLFYGVTVAGQIV. Asparagine 396 is an L-tryptophan binding site. The Cytoplasmic portion of the chain corresponds to 410 to 424; it reads LRWKKPDIPRPIKIS. Helical transmembrane passes span 425-447 and 448-467; these read LLFP…WSEP and VVCG…YFLG. At 468–533 the chain is on the cytoplasmic side; the sequence is VYWQHKPKCF…VKDPDSEEQP (66 aa). Residues 500–533 are disordered; the sequence is GDSGTEETIDDVEEQHKPIFQPTPVKDPDSEEQP. Residues 502 to 512 are compositionally biased toward acidic residues; the sequence is SGTEETIDDVE. The residue at position 529 (serine 529) is a Phosphoserine.

The protein belongs to the amino acid-polyamine-organocation (APC) superfamily. L-type amino acid transporter (LAT) (TC 2.A.3.8) family. In terms of assembly, disulfide-linked heterodimer composed of the catalytic light chain subunit SLC7A8 and the heavy chain subunit SLC3A2. SLC3A2 acts as a chaperone for correct plasma membrane trafficking and stabilization of SLC7A8 and modulates the substrate affinity and specificity of SLC7A8. ICAM-1 associates with the heterodimer SLC3A2/SLC7A8; facilitates leucine uptake. In terms of tissue distribution, expression is seen in jejunum mucosa and the epithelial cells of the jejunum, ileum and colon, as well as in kidney, placenta, brain, testis and skeletal muscle. Expressed in retina, inner blood-retinal barrier of retina, retinal vascular endothelial cells. Also expressed in the intestinal epithelial cell line IEC-6 and in the retinal capillary endothelial cell line TR-iBRB2.

The protein localises to the cell membrane. The protein resides in the basolateral cell membrane. The enzyme catalyses L-dopa(out) + L-phenylalanine(in) = L-dopa(in) + L-phenylalanine(out). The catalysed reaction is 3,3'-diiodo-L-thyronine(out) = 3,3'-diiodo-L-thyronine(in). It catalyses the reaction L-histidine(in) + L-phenylalanine(out) = L-histidine(out) + L-phenylalanine(in). It carries out the reaction L-tryptophan(in) + L-phenylalanine(out) = L-tryptophan(out) + L-phenylalanine(in). The enzyme catalyses L-isoleucine(in) + L-phenylalanine(out) = L-isoleucine(out) + L-phenylalanine(in). The catalysed reaction is L-valine(in) + L-phenylalanine(out) = L-valine(out) + L-phenylalanine(in). It catalyses the reaction L-leucine(in) + L-phenylalanine(out) = L-leucine(out) + L-phenylalanine(in). It carries out the reaction L-glutamine(in) + L-phenylalanine(out) = L-glutamine(out) + L-phenylalanine(in). The enzyme catalyses L-cysteine(in) + L-phenylalanine(out) = L-cysteine(out) + L-phenylalanine(in). The catalysed reaction is L-phenylalanine(out) + L-methionine(in) = L-phenylalanine(in) + L-methionine(out). It catalyses the reaction L-leucine(out) + L-methionine(in) = L-leucine(in) + L-methionine(out). It carries out the reaction L-cysteine(out) + L-methionine(in) = L-cysteine(in) + L-methionine(out). The enzyme catalyses S-methylmercury-L-cysteine(out) + L-methionine(in) = S-methylmercury-L-cysteine(in) + L-methionine(out). The catalysed reaction is S-methylmercury-L-cysteine(in) + L-leucine(out) = S-methylmercury-L-cysteine(out) + L-leucine(in). It catalyses the reaction S-methylmercury-L-cysteine(in) + L-phenylalanine(out) = S-methylmercury-L-cysteine(out) + L-phenylalanine(in). It carries out the reaction L-phenylalanine(out) + L-serine(in) = L-phenylalanine(in) + L-serine(out). The enzyme catalyses L-phenylalanine(out) + glycine(in) = L-phenylalanine(in) + glycine(out). The catalysed reaction is L-phenylalanine(out) + L-alanine(in) = L-phenylalanine(in) + L-alanine(out). It catalyses the reaction 3,3',5-triiodo-L-thyronine(out) = 3,3',5-triiodo-L-thyronine(in). With respect to regulation, leucine transport activity is inhibited by 2-amino-bicyclo-(2,2,1)-heptane-2-carboxylate (BCH), glycine, L-isomers of the neutral amino acids and histidine. In terms of biological role, associates with SLC3A2 to form a functional heterodimeric complex that translocates small and large neutral amino acids with broad specificity and a stoichiometry of 1:1. Functions as amino acid antiporter mediating the influx of extracellular essential amino acids mainly in exchange with the efflux of highly concentrated intracellular amino acids. Has relatively symmetrical selectivities but strongly asymmetrical substrate affinities at both the intracellular and extracellular sides of the transporter. This asymmetry allows SLC7A8 to regulate intracellular amino acid pools (mM concentrations) by exchange with external amino acids (uM concentration range), equilibrating the relative concentrations of different amino acids across the plasma membrane instead of mediating their net uptake. May play an essential role in the reabsorption of neutral amino acids from the epithelial cells to the bloodstream in the kidney. Involved in the uptake of methylmercury (MeHg) when administered as the L-cysteine or D,L-homocysteine complexes, and hence plays a role in metal ion homeostasis and toxicity. Involved in the cellular activity of small molecular weight nitrosothiols, via the stereoselective transport of L-nitrosocysteine (L-CNSO) across the transmembrane. Imports the thyroid hormone diiodothyronine (T2) and to a smaller extent triiodothyronine (T3) but not rT 3 or thyroxine (T4). Mediates the uptake of L-DOPA. May participate in auditory function. This Rattus norvegicus (Rat) protein is Large neutral amino acids transporter small subunit 2 (Slc7a8).